An 883-amino-acid chain; its full sequence is Valine--tRNA ligase (883 aa).

Positions 52-62 (PNVTGRLHLGH) match the 'HIGH' region motif. Positions 529 to 533 (KMSKS) match the 'KMSKS' region motif. Residue K532 coordinates ATP. Residues 813 to 848 (LEGLIDFDKEIKRLENELAKWTKEVERVQKKLSNQG) are a coiled coil.

This sequence belongs to the class-I aminoacyl-tRNA synthetase family. ValS type 1 subfamily. As to quaternary structure, monomer.

The protein localises to the cytoplasm. The enzyme catalyses tRNA(Val) + L-valine + ATP = L-valyl-tRNA(Val) + AMP + diphosphate. In terms of biological role, catalyzes the attachment of valine to tRNA(Val). As ValRS can inadvertently accommodate and process structurally similar amino acids such as threonine, to avoid such errors, it has a 'posttransfer' editing activity that hydrolyzes mischarged Thr-tRNA(Val) in a tRNA-dependent manner. This Oceanobacillus iheyensis (strain DSM 14371 / CIP 107618 / JCM 11309 / KCTC 3954 / HTE831) protein is Valine--tRNA ligase.